The primary structure comprises 153 residues: Small ribosomal subunit protein uS15 (153 aa).

Belongs to the universal ribosomal protein uS15 family. As to quaternary structure, part of the 30S ribosomal subunit.

This chain is Small ribosomal subunit protein uS15, found in Sulfolobus acidocaldarius (strain ATCC 33909 / DSM 639 / JCM 8929 / NBRC 15157 / NCIMB 11770).